Here is a 208-residue protein sequence, read N- to C-terminus: Outer-membrane lipoprotein LolB (208 aa).

Positions Met1–Gly17 are cleaved as a signal peptide. A lipid anchor (N-palmitoyl cysteine) is attached at Cys18. Cys18 carries the S-diacylglycerol cysteine lipid modification.

Belongs to the LolB family. In terms of assembly, monomer.

Its subcellular location is the cell outer membrane. Functionally, plays a critical role in the incorporation of lipoproteins in the outer membrane after they are released by the LolA protein. The sequence is that of Outer-membrane lipoprotein LolB from Marinobacter nauticus (strain ATCC 700491 / DSM 11845 / VT8) (Marinobacter aquaeolei).